The sequence spans 263 residues: L-histidine 2-aminobutanoyltransferase (263 aa).

Belongs to the methyltransferase superfamily. CntL family. As to quaternary structure, interacts with CntM.

It carries out the reaction L-histidine + S-adenosyl-L-methionine = (2S)-2-amino-4-{[(1S)-1-carboxy-2-(1H-imidazol-4-yl)ethyl]amino}butanoate + S-methyl-5'-thioadenosine + H(+). Catalyzes the nucleophilic attack of one alpha-aminobutanoate moiety from SAM onto L-histidine to produce the intermediate (2S)-2-amino-4-{[(1S)-1-carboxy-2-(1H-imidazol-4-yl)ethyl]amino}butanoate. Functions in the biosynthesis of the metallophore pseudopaline, which is involved in the acquisition of nickel and zinc, and thus enables bacterial growth inside the host, where metal access is limited. Therefore, this enzyme probably contributes to Pseudomonas virulence. Cannot use D-histidine in place of L-histidine as substrate. In Pseudomonas aeruginosa (strain UCBPP-PA14), this protein is L-histidine 2-aminobutanoyltransferase.